The chain runs to 404 residues: Putative aspartate aminotransferase, cytoplasmic 2 (404 aa).

Lys-249 carries the N6-(pyridoxal phosphate)lysine modification.

This sequence belongs to the class-I pyridoxal-phosphate-dependent aminotransferase family. As to quaternary structure, homodimer. Pyridoxal 5'-phosphate serves as cofactor.

It localises to the cytoplasm. The catalysed reaction is L-aspartate + 2-oxoglutarate = oxaloacetate + L-glutamate. The protein is Putative aspartate aminotransferase, cytoplasmic 2 (Got1l1) of Mus musculus (Mouse).